The primary structure comprises 254 residues: 5-oxoprolinase subunit A (254 aa).

It belongs to the LamB/PxpA family. In terms of assembly, forms a complex composed of PxpA, PxpB and PxpC.

It carries out the reaction 5-oxo-L-proline + ATP + 2 H2O = L-glutamate + ADP + phosphate + H(+). Catalyzes the cleavage of 5-oxoproline to form L-glutamate coupled to the hydrolysis of ATP to ADP and inorganic phosphate. This Burkholderia mallei (strain NCTC 10247) protein is 5-oxoprolinase subunit A.